A 400-amino-acid polypeptide reads, in one-letter code: Acetate kinase (400 aa).

Asn10 is a binding site for Mg(2+). Residue Lys17 coordinates ATP. Arg91 contacts substrate. Asp150 (proton donor/acceptor) is an active-site residue. Residues 210-214, 285-287, and 333-337 contribute to the ATP site; these read HLGSG, DCR, and GIGEN. Glu387 contributes to the Mg(2+) binding site.

The protein belongs to the acetokinase family. As to quaternary structure, homodimer. The cofactor is Mg(2+). Mn(2+) is required as a cofactor.

The protein localises to the cytoplasm. It carries out the reaction acetate + ATP = acetyl phosphate + ADP. The protein operates within metabolic intermediate biosynthesis; acetyl-CoA biosynthesis; acetyl-CoA from acetate: step 1/2. In terms of biological role, catalyzes the formation of acetyl phosphate from acetate and ATP. Can also catalyze the reverse reaction. This chain is Acetate kinase, found in Baumannia cicadellinicola subsp. Homalodisca coagulata.